We begin with the raw amino-acid sequence, 650 residues long: ATP-dependent DNA helicase PIF1 (650 aa).

Residues 14–192 are PINT; the sequence is MPSSTEAATD…ALEKRPMESQ (179 aa). Serine 40 and serine 164 each carry phosphoserine. Positions 171–199 are disordered; the sequence is LQRAAATKAPDSALEKRPMESQTSTEAPR. 237 to 244 lines the ATP pocket; sequence GSAGTGKS. Residues 586–605 mediate DNA binding; that stretch reads QAYVALSRARSLQGLRVLDF. Residues 631–650 form a disordered region; the sequence is LESQDDEEANSDLENMDPNL. A compositionally biased stretch (acidic residues) spans 633-650; sequence SQDDEEANSDLENMDPNL.

Belongs to the helicase family. PIF1 subfamily. In terms of assembly, monomer. Interacts with telomerase. Mg(2+) serves as cofactor.

It localises to the nucleus. It is found in the mitochondrion. The enzyme catalyses Couples ATP hydrolysis with the unwinding of duplex DNA at the replication fork by translocating in the 5'-3' direction. This creates two antiparallel DNA single strands (ssDNA). The leading ssDNA polymer is the template for DNA polymerase III holoenzyme which synthesizes a continuous strand.. It carries out the reaction ATP + H2O = ADP + phosphate + H(+). Functionally, DNA-dependent ATPase and 5'-3' DNA helicase required for the maintenance of both mitochondrial and nuclear genome stability. Efficiently unwinds G-quadruplex (G4) DNA structures and forked RNA-DNA hybrids. Resolves G4 structures, preventing replication pausing and double-strand breaks (DSBs) at G4 motifs. Involved in the maintenance of telomeric DNA. Inhibits telomere elongation, de novo telomere formation and telomere addition to DSBs via catalytic inhibition of telomerase. Reduces the processivity of telomerase by displacing active telomerase from DNA ends. Releases telomerase by unwinding the short telomerase RNA/telomeric DNA hybrid that is the intermediate in the telomerase reaction. Possesses an intrinsic strand annealing activity. The chain is ATP-dependent DNA helicase PIF1 from Mus musculus (Mouse).